Reading from the N-terminus, the 265-residue chain is Thiazole synthase (265 aa).

Catalysis depends on K103, which acts as the Schiff-base intermediate with DXP. Residues G164, 190–191, and 212–213 each bind 1-deoxy-D-xylulose 5-phosphate; these read AG and NT.

This sequence belongs to the ThiG family. As to quaternary structure, homotetramer. Forms heterodimers with either ThiH or ThiS.

The protein resides in the cytoplasm. The enzyme catalyses [ThiS sulfur-carrier protein]-C-terminal-Gly-aminoethanethioate + 2-iminoacetate + 1-deoxy-D-xylulose 5-phosphate = [ThiS sulfur-carrier protein]-C-terminal Gly-Gly + 2-[(2R,5Z)-2-carboxy-4-methylthiazol-5(2H)-ylidene]ethyl phosphate + 2 H2O + H(+). It functions in the pathway cofactor biosynthesis; thiamine diphosphate biosynthesis. Catalyzes the rearrangement of 1-deoxy-D-xylulose 5-phosphate (DXP) to produce the thiazole phosphate moiety of thiamine. Sulfur is provided by the thiocarboxylate moiety of the carrier protein ThiS. In vitro, sulfur can be provided by H(2)S. This is Thiazole synthase from Bordetella pertussis (strain Tohama I / ATCC BAA-589 / NCTC 13251).